Here is a 227-residue protein sequence, read N- to C-terminus: dTTP/UTP pyrophosphatase (227 aa).

Catalysis depends on Asp98, which acts as the Proton acceptor.

Belongs to the Maf family. YhdE subfamily. Requires a divalent metal cation as cofactor.

It is found in the cytoplasm. It carries out the reaction dTTP + H2O = dTMP + diphosphate + H(+). It catalyses the reaction UTP + H2O = UMP + diphosphate + H(+). Functionally, nucleoside triphosphate pyrophosphatase that hydrolyzes dTTP and UTP. May have a dual role in cell division arrest and in preventing the incorporation of modified nucleotides into cellular nucleic acids. The chain is dTTP/UTP pyrophosphatase from Bartonella quintana (strain Toulouse) (Rochalimaea quintana).